We begin with the raw amino-acid sequence, 283 residues long: uncharacterized protein (283 aa).

A run of 5 helical transmembrane segments spans residues 8–28 (LILS…IGYV), 38–58 (GIHS…VKIA), 73–93 (FECL…YEIG), 100–120 (IIYG…ILSI), and 175–195 (AIAG…ICLT).

This sequence belongs to the cation diffusion facilitator (CDF) transporter (TC 2.A.4) family.

Its subcellular location is the cell membrane. This is an uncharacterized protein from Methanocaldococcus jannaschii (strain ATCC 43067 / DSM 2661 / JAL-1 / JCM 10045 / NBRC 100440) (Methanococcus jannaschii).